Consider the following 550-residue polypeptide: Glucose-6-phosphate isomerase 3 (550 aa).

E357 acts as the Proton donor in catalysis. Active-site residues include H388 and K514.

Belongs to the GPI family.

It is found in the cytoplasm. The enzyme catalyses alpha-D-glucose 6-phosphate = beta-D-fructose 6-phosphate. The protein operates within carbohydrate biosynthesis; gluconeogenesis. It functions in the pathway carbohydrate degradation; glycolysis; D-glyceraldehyde 3-phosphate and glycerone phosphate from D-glucose: step 2/4. In terms of biological role, catalyzes the reversible isomerization of glucose-6-phosphate to fructose-6-phosphate. In Rhodococcus jostii (strain RHA1), this protein is Glucose-6-phosphate isomerase 3.